Reading from the N-terminus, the 126-residue chain is Glycine cleavage system H protein (126 aa).

One can recognise a Lipoyl-binding domain in the interval 22–104; the sequence is IAYVGITDYA…YGEGWLIKMK (83 aa). The residue at position 63 (Lys63) is an N6-lipoyllysine.

The protein belongs to the GcvH family. The glycine cleavage system is composed of four proteins: P, T, L and H. It depends on (R)-lipoate as a cofactor.

Its function is as follows. The glycine cleavage system catalyzes the degradation of glycine. The H protein shuttles the methylamine group of glycine from the P protein to the T protein. The sequence is that of Glycine cleavage system H protein from Bacteroides thetaiotaomicron (strain ATCC 29148 / DSM 2079 / JCM 5827 / CCUG 10774 / NCTC 10582 / VPI-5482 / E50).